An 89-amino-acid chain; its full sequence is Small ribosomal subunit protein uS17 (89 aa).

Belongs to the universal ribosomal protein uS17 family. In terms of assembly, part of the 30S ribosomal subunit.

Its function is as follows. One of the primary rRNA binding proteins, it binds specifically to the 5'-end of 16S ribosomal RNA. This Coxiella burnetii (strain RSA 331 / Henzerling II) protein is Small ribosomal subunit protein uS17.